Here is a 152-residue protein sequence, read N- to C-terminus: uncharacterized protein (152 aa).

The HTH marR-type domain occupies 3–143 (EQKLCQAINL…IIEIFTILKS (141 aa)). The segment at residues 55–78 (PGSLAMYQNVHKSAISNRLKKLLE) is a DNA-binding region (H-T-H motif).

This is an uncharacterized protein from Bacillus subtilis (strain 168).